Here is a 79-residue protein sequence, read N- to C-terminus: Protein SIP18 (79 aa).

Positions 1-79 (MSNMMNKFAE…DWKTYENMKK (79 aa)) are disordered. The segment covering 8 to 20 (FAEKLQGNDDSHQ) has biased composition (basic and acidic residues).

This chain is Protein SIP18 (SIP18), found in Saccharomyces cerevisiae (strain ATCC 204508 / S288c) (Baker's yeast).